Reading from the N-terminus, the 1062-residue chain is Platelet-derived growth factor receptor alpha (1062 aa).

The first 27 residues, 1 to 27 (MFPPSSAPLLLPQLEELVVPLHTAFTL), serve as a signal peptide directing secretion. 5 Ig-like C2-type domains span residues 28-96 (TCQG…VYVP), 91-184 (IYVY…VHGW), 190-281 (LHVE…KQIA), 287-381 (SEFM…RTVS), and 389-493 (PAVI…IKLV). Over 28-504 (TCQGEATIAW…NGPHPELTVA (477 aa)) the chain is Extracellular. Cys-29 and Cys-74 form a disulfide bridge. 2 N-linked (GlcNAc...) asparagine glycosylation sites follow: Asn-79 and Asn-132. Cystine bridges form between Cys-124/Cys-165 and Cys-211/Cys-265. Asn-273, Asn-333, Asn-366, Asn-433, and Asn-444 each carry an N-linked (GlcNAc...) asparagine glycan. Cys-410 and Cys-477 form a disulfide bridge. Residues 505 to 525 (AAVLVLLVIVIISLIVLVVIW) form a helical membrane-spanning segment. Residues 526–1062 (KQKPRYEIRW…CSDLVEDSFL (537 aa)) lie on the Cytoplasmic side of the membrane. 2 positions are modified to phosphotyrosine; by autocatalysis: Tyr-548 and Tyr-550. A Protein kinase domain is found at 569-945 (LVLGRILGSG…HYERVNHEFL (377 aa)). ATP contacts are provided by residues 575-583 (LGSGAFGKV) and Lys-603. Tyr-697, Tyr-708, Tyr-719, Tyr-731, and Tyr-739 each carry phosphotyrosine; by autocatalysis. Residues 734–754 (LQGSNYDHPPSQKGSNDGEMD) form a disordered region. Asp-793 functions as the Proton acceptor in the catalytic mechanism. Tyr-824 and Tyr-963 each carry phosphotyrosine; by autocatalysis. Basic and acidic residues predominate over residues 975–986 (KDRESGFDEQRL). Residues 975–1034 (KDRESGFDEQRLSSDSGYIIPLPDLDPISDEEYGKRNRHSSQTSEESAIETGSSSSTFAK) are disordered. At Tyr-992 the chain carries Phosphotyrosine; by autocatalysis. Positions 1014 to 1032 (SSQTSEESAIETGSSSSTF) are enriched in polar residues.

The protein belongs to the protein kinase superfamily. Tyr protein kinase family. CSF-1/PDGF receptor subfamily. In terms of assembly, interacts with homodimeric pdgfa, pdgfb and pdgfc, and with heterodimers formed by pdgfa and pdgfb. monomer in the absence of bound ligand. Interaction with dimeric pdgfa, pdgfb and/or pdgfc leads to receptor dimerization, where both pdgfra homodimers and heterodimers with pdgfrb are observed. Post-translationally, ubiquitinated, leading to its degradation. In terms of processing, autophosphorylated on tyrosine residues upon ligand binding. Autophosphorylation occurs in trans, i.e. one subunit of the dimeric receptor phosphorylates tyrosine residues on the other subunit.

The protein resides in the cell membrane. It catalyses the reaction L-tyrosyl-[protein] + ATP = O-phospho-L-tyrosyl-[protein] + ADP + H(+). Its activity is regulated as follows. Present in an inactive conformation in the absence of bound ligand. Binding of pdgfa and/or pdgfb leads to dimerization and activation by autophosphorylation on tyrosine residues. Functionally, tyrosine-protein kinase that acts as a cell-surface receptor for pdgfa, pdgfb and pdgfc and plays an essential role in the regulation of embryonic development, cell proliferation, survival and chemotaxis. Depending on the context, promotes or inhibits cell proliferation and cell migration. Plays an important role in the differentiation of bone marrow-derived mesenchymal stem cells. Required for normal skeleton development. Required for normal development of the gastrointestinal tract. Plays a role in cell migration and chemotaxis in wound healing. Plays a role in platelet activation, secretion of agonists from platelet granules, and in thrombin-induced platelet aggregation. Binding of its cognate ligands - homodimeric pdgfa, homodimeric pdgfb, heterodimers formed by pdgfa and pdgfb or homodimeric pdgfc -leads to the activation of several signaling cascades; the response depends on the nature of the bound ligand and is modulated by the formation of heterodimers between pdgfra and pdgfrb. Phosphorylates pik3r1, plcg1, and ptpn11. Activation of plcg1 leads to the production of the cellular signaling molecules diacylglycerol and inositol 1,4,5-trisphosphate, mobilization of cytosolic Ca(2+) and the activation of protein kinase C. Phosphorylates pik3r1, the regulatory subunit of phosphatidylinositol 3-kinase, and thereby mediates activation of the AKT1 signaling pathway. Mediates activation of hras and of the MAP kinases mapk1/erk2 and/or mapk3/erk1. Promotes activation of STAT family members stat1, stat3 and stat5a and/or stat5b. Receptor signaling is down-regulated by protein phosphatases that dephosphorylate the receptor and its down-stream effectors, and by rapid internalization of the activated receptor. The sequence is that of Platelet-derived growth factor receptor alpha (pdgfra) from Takifugu rubripes (Japanese pufferfish).